Consider the following 197-residue polypeptide: Elongation factor Ts (197 aa).

Residues 81–84 form an involved in Mg(2+) ion dislocation from EF-Tu region; sequence TDFV.

It belongs to the EF-Ts family.

It localises to the cytoplasm. In terms of biological role, associates with the EF-Tu.GDP complex and induces the exchange of GDP to GTP. It remains bound to the aminoacyl-tRNA.EF-Tu.GTP complex up to the GTP hydrolysis stage on the ribosome. This is Elongation factor Ts from Fervidobacterium nodosum (strain ATCC 35602 / DSM 5306 / Rt17-B1).